The following is a 159-amino-acid chain: Growth arrest and DNA damage-inducible protein GADD45 gamma (159 aa).

The interval 43–86 is homodimerization; the sequence is VYESAKVLNVDPDNVTFCVLAAGEEDEGDIALQIHFTLIQAFCC.

It belongs to the GADD45 family. Undergoes concentration-dependent homodimerization, which is required for growth inhibititory activity and enhances interaction with PCNA. Interacts with GADD45GIP1. Interacts with PCNA.

Involved in the regulation of growth and apoptosis. Mediates activation of stress-responsive MTK1/MEKK4 MAPKKK. The chain is Growth arrest and DNA damage-inducible protein GADD45 gamma (GADD45G) from Homo sapiens (Human).